A 60-amino-acid polypeptide reads, in one-letter code: Large ribosomal subunit protein bL32 (60 aa).

Residues 1–16 (MAVPKRKTTPSKRGMR) are compositionally biased toward basic residues. The tract at residues 1–60 (MAVPKRKTTPSKRGMRRSADALKQPAYVENPDSGELHRPHHVDLKSGMYRGKQILKPKGE) is disordered. Residues 34–44 (GELHRPHHVDL) show a composition bias toward basic and acidic residues.

Belongs to the bacterial ribosomal protein bL32 family.

This is Large ribosomal subunit protein bL32 from Parvibaculum lavamentivorans (strain DS-1 / DSM 13023 / NCIMB 13966).